The sequence spans 377 residues: uncharacterized protein (377 aa).

The next 2 membrane-spanning stretches (helical) occupy residues Leu-23–Tyr-43 and Gly-251–Tyr-271.

Its subcellular location is the cell membrane. This is an uncharacterized protein from Methanocaldococcus jannaschii (strain ATCC 43067 / DSM 2661 / JAL-1 / JCM 10045 / NBRC 100440) (Methanococcus jannaschii).